The chain runs to 125 residues: Large ribosomal subunit protein bL12 (125 aa).

The protein belongs to the bacterial ribosomal protein bL12 family. In terms of assembly, homodimer. Part of the ribosomal stalk of the 50S ribosomal subunit. Forms a multimeric L10(L12)X complex, where L10 forms an elongated spine to which 2 to 4 L12 dimers bind in a sequential fashion. Binds GTP-bound translation factors.

In terms of biological role, forms part of the ribosomal stalk which helps the ribosome interact with GTP-bound translation factors. Is thus essential for accurate translation. This chain is Large ribosomal subunit protein bL12, found in Liberibacter africanus (Citrus greening disease).